The following is a 609-amino-acid chain: Membrane-bound O-acyltransferase GUP2 (609 aa).

An N-terminal signal peptide occupies residues 1-18; the sequence is MSMLRIWSCIVHFFSVQA. At 19–75 the chain is on the lumenal side; it reads LDSRIKPDIEFKRRQRIFINSSKEENGSSSSAVTVTRNPVLSSNSPSPPLWNTWEFR. Residues 76–96 traverse the membrane as a helical segment; sequence LYYLAFTVVVPFMIKAALATS. Topologically, residues 97–133 are cytoplasmic; sequence SESNPNYYKFSGLLAHGWILGRKVDNSDPQYRFFRSN. A helical transmembrane segment spans residues 134–154; it reads FFLLAILILLQIILKKVFVKF. The Lumenal portion of the chain corresponds to 155–169; it reads SKIPKTKFDFACGLV. Residues 170 to 190 form a helical membrane-spanning segment; sequence FVCFMYGINSVKLFTHAFIFF. Topologically, residues 191–200 are cytoplasmic; the sequence is TLAHSLKRKR. Residues 201 to 221 traverse the membrane as a helical segment; it reads LIAAFAIWSYGIFTLFINQKM. Residues 222-324 are Lumenal-facing; it reads KNLPFNNIAI…VAEHHIQDYN (103 aa). The helical transmembrane segment at 325 to 345 threads the bilayer; that stretch reads FINFIAYITYAPLFLVGPIIT. Over 346–371 the chain is Cytoplasmic; sequence FNDYLYQSENKLPSLTKKNIGFYALK. The helical transmembrane segment at 372 to 392 threads the bilayer; sequence VFSSLLLMEIILHYIYVGAIA. Over 393 to 406 the chain is Lumenal; it reads RTKAWNNDTPLQQA. The helical transmembrane segment at 407–427 threads the bilayer; sequence MIALFNLNIMYLKLLIPWRLF. The Cytoplasmic segment spans residues 428–474; sequence RLWAMVDGIDAPENMLRCVDNNYSTVGFWRAWHTSFNKWVIRYIYVP. A helical transmembrane segment spans residues 475–495; the sequence is FGGSNNKILTSFAVFSFVAIW. Residue His496 is part of the active site. The Lumenal portion of the chain corresponds to 496-502; sequence HDIQLRV. Residues 503–523 traverse the membrane as a helical segment; sequence LFWGWLTVLLLLGETYITNCF. The Cytoplasmic segment spans residues 524–533; the sequence is SRYRFRSWYR. A helical membrane pass occupies residues 534–554; that stretch reads FVCGIGAAINICMMMIINVYG. The Lumenal portion of the chain corresponds to 555–575; sequence FCLGAEGTKLLLKGIFNNSHS. A helical transmembrane segment spans residues 576 to 596; sequence PEFLTAVMVSLFIAVQVMFEI. Residues 597-609 lie on the Cytoplasmic side of the membrane; that stretch reads REEEKRHGINLKC.

It belongs to the membrane-bound acyltransferase family.

It is found in the endoplasmic reticulum membrane. Probable membrane-bound O-acyltransferase. Together with GUP1, has an influence on the chemical composition of the yeast extracellular matrix (yECM) in yeast multicellular aggregates, such as biofilms and colonies. The chain is Membrane-bound O-acyltransferase GUP2 (GUP2) from Saccharomyces cerevisiae (strain ATCC 204508 / S288c) (Baker's yeast).